Consider the following 159-residue polypeptide: Ribosomal RNA large subunit methyltransferase H (159 aa).

Residues leucine 76, glycine 108, and 127-132 contribute to the S-adenosyl-L-methionine site; that span reads FGQLTL.

It belongs to the RNA methyltransferase RlmH family. In terms of assembly, homodimer.

The protein localises to the cytoplasm. It catalyses the reaction pseudouridine(1915) in 23S rRNA + S-adenosyl-L-methionine = N(3)-methylpseudouridine(1915) in 23S rRNA + S-adenosyl-L-homocysteine + H(+). Its function is as follows. Specifically methylates the pseudouridine at position 1915 (m3Psi1915) in 23S rRNA. This is Ribosomal RNA large subunit methyltransferase H from Streptococcus gordonii (strain Challis / ATCC 35105 / BCRC 15272 / CH1 / DL1 / V288).